A 127-amino-acid polypeptide reads, in one-letter code: Secreted RxLR effector protein 7 (127 aa).

The signal sequence occupies residues methionine 1–alanine 21. The RxLR-dEER motif lies at arginine 48 to arginine 65.

Belongs to the RxLR effector family.

It localises to the secreted. Its subcellular location is the host nucleus. The protein localises to the host cytoplasm. In terms of biological role, secreted effector that completely suppresses the host cell death induced by cell death-inducing proteins. The chain is Secreted RxLR effector protein 7 from Plasmopara viticola (Downy mildew of grapevine).